Here is a 227-residue protein sequence, read N- to C-terminus: ATP synthase F(0) complex subunit a (227 aa).

The next 6 helical transmembrane spans lie at 12–32, 69–89, 98–118, 132–152, 180–200, and 202–222; these read PTYLGIPLIAVALTLPWILFP, WAVLLTSLMLFLITLNMLGLL, QLSLNMGLAVPLWLATVIIGM, EGTPVPLIPVLIIIETISLFI, FVLMPIMPTVAILTSIVLFLL, and LLEIAVAMIQAYVFVLLLSLY.

Belongs to the ATPase A chain family. As to quaternary structure, component of the ATP synthase complex composed at least of ATP5F1A/subunit alpha, ATP5F1B/subunit beta, ATP5MC1/subunit c (homooctomer), MT-ATP6/subunit a, MT-ATP8/subunit 8, ATP5ME/subunit e, ATP5MF/subunit f, ATP5MG/subunit g, ATP5MK/subunit k, ATP5MJ/subunit j, ATP5F1C/subunit gamma, ATP5F1D/subunit delta, ATP5F1E/subunit epsilon, ATP5PF/subunit F6, ATP5PB/subunit b, ATP5PD/subunit d, ATP5PO/subunit OSCP. ATP synthase complex consists of a soluble F(1) head domain (subunits alpha(3) and beta(3)) - the catalytic core - and a membrane F(0) domain - the membrane proton channel (subunits c, a, 8, e, f, g, k and j). These two domains are linked by a central stalk (subunits gamma, delta, and epsilon) rotating inside the F1 region and a stationary peripheral stalk (subunits F6, b, d, and OSCP). Interacts with DNAJC30; interaction is direct.

It is found in the mitochondrion inner membrane. The catalysed reaction is H(+)(in) = H(+)(out). Subunit a, of the mitochondrial membrane ATP synthase complex (F(1)F(0) ATP synthase or Complex V) that produces ATP from ADP in the presence of a proton gradient across the membrane which is generated by electron transport complexes of the respiratory chain. ATP synthase complex consist of a soluble F(1) head domain - the catalytic core - and a membrane F(1) domain - the membrane proton channel. These two domains are linked by a central stalk rotating inside the F(1) region and a stationary peripheral stalk. During catalysis, ATP synthesis in the catalytic domain of F(1) is coupled via a rotary mechanism of the central stalk subunits to proton translocation. With the subunit c (ATP5MC1), forms the proton-conducting channel in the F(0) domain, that contains two crucial half-channels (inlet and outlet) that facilitate proton movement from the mitochondrial intermembrane space (IMS) into the matrix. Protons are taken up via the inlet half-channel and released through the outlet half-channel, following a Grotthuss mechanism. This is ATP synthase F(0) complex subunit a from Salmo salar (Atlantic salmon).